We begin with the raw amino-acid sequence, 178 residues long: Ras-like protein (178 aa).

1–6 (GGVGKS) provides a ligand contact to GTP. The Effector region motif lies at 21-29 (YDPTIEDSY). Residues 46–50 (DTAGQ) and 105–108 (NKCD) each bind GTP. At Cys175 the chain carries Cysteine methyl ester. Cys175 is lipidated: S-geranylgeranyl cysteine. Residues 176-178 (SIL) constitute a propeptide, removed in mature form.

The protein belongs to the small GTPase superfamily. Ras family.

Its subcellular location is the cell membrane. The catalysed reaction is GTP + H2O = GDP + phosphate + H(+). With respect to regulation, alternates between an inactive form bound to GDP and an active form bound to GTP. Activated by a guanine nucleotide-exchange factor (GEF) and inactivated by a GTPase-activating protein (GAP). Its function is as follows. Ras proteins bind GDP/GTP and possess intrinsic GTPase activity. In Artemia salina (Brine shrimp), this protein is Ras-like protein.